A 430-amino-acid chain; its full sequence is Trigger factor (430 aa).

The 86-residue stretch at 163–248 folds into the PPIase FKBP-type domain; sequence GDTAVFDFAG…LHEVKTKQVP (86 aa).

This sequence belongs to the FKBP-type PPIase family. Tig subfamily.

The protein localises to the cytoplasm. It catalyses the reaction [protein]-peptidylproline (omega=180) = [protein]-peptidylproline (omega=0). Involved in protein export. Acts as a chaperone by maintaining the newly synthesized protein in an open conformation. Functions as a peptidyl-prolyl cis-trans isomerase. The polypeptide is Trigger factor (Exiguobacterium sp. (strain ATCC BAA-1283 / AT1b)).